We begin with the raw amino-acid sequence, 148 residues long: Hemoglobin subunit beta-4 (148 aa).

One can recognise a Globin domain in the interval 3 to 148 (DWTDPERSAI…VVSALGRQYH (146 aa)). Residues His64 and His93 each contribute to the heme b site.

This sequence belongs to the globin family. In terms of assembly, heterotetramer of two alpha chains and two beta chains. Red blood cells.

Involved in oxygen transport from gills to the various peripheral tissues. The sequence is that of Hemoglobin subunit beta-4 (hbb4) from Oncorhynchus mykiss (Rainbow trout).